Consider the following 453-residue polypeptide: Pup--protein ligase (453 aa).

E9 provides a ligand contact to Mg(2+). R53 serves as a coordination point for ATP. Position 55 (Y55) interacts with Mg(2+). D57 (proton acceptor) is an active-site residue. E63 lines the Mg(2+) pocket. Positions 66 and 420 each coordinate ATP.

The protein belongs to the Pup ligase/Pup deamidase family. Pup-conjugating enzyme subfamily.

It carries out the reaction ATP + [prokaryotic ubiquitin-like protein]-L-glutamate + [protein]-L-lysine = ADP + phosphate + N(6)-([prokaryotic ubiquitin-like protein]-gamma-L-glutamyl)-[protein]-L-lysine.. The protein operates within protein degradation; proteasomal Pup-dependent pathway. It participates in protein modification; protein pupylation. In terms of biological role, catalyzes the covalent attachment of the prokaryotic ubiquitin-like protein modifier Pup to the proteasomal substrate proteins, thereby targeting them for proteasomal degradation. This tagging system is termed pupylation. The ligation reaction involves the side-chain carboxylate of the C-terminal glutamate of Pup and the side-chain amino group of a substrate lysine. The polypeptide is Pup--protein ligase (Kribbella flavida (strain DSM 17836 / JCM 10339 / NBRC 14399)).